A 388-amino-acid polypeptide reads, in one-letter code: LL-diaminopimelate aminotransferase (388 aa).

Y13, G38, K102, Y126, and N176 together coordinate substrate. Residues 101–102 (SK), Y126, N176, Y207, and 235–237 (SLS) contribute to the pyridoxal 5'-phosphate site. K238 is modified (N6-(pyridoxal phosphate)lysine). R246 contacts pyridoxal 5'-phosphate. Residue R364 coordinates substrate.

The protein belongs to the class-I pyridoxal-phosphate-dependent aminotransferase family. LL-diaminopimelate aminotransferase subfamily. As to quaternary structure, homodimer. It depends on pyridoxal 5'-phosphate as a cofactor.

It carries out the reaction (2S,6S)-2,6-diaminopimelate + 2-oxoglutarate = (S)-2,3,4,5-tetrahydrodipicolinate + L-glutamate + H2O + H(+). Its pathway is amino-acid biosynthesis; L-lysine biosynthesis via DAP pathway; LL-2,6-diaminopimelate from (S)-tetrahydrodipicolinate (aminotransferase route): step 1/1. In terms of biological role, involved in the synthesis of meso-diaminopimelate (m-DAP or DL-DAP), required for both lysine and peptidoglycan biosynthesis. Catalyzes the direct conversion of tetrahydrodipicolinate to LL-diaminopimelate. The polypeptide is LL-diaminopimelate aminotransferase (Dehalococcoides mccartyi (strain ATCC BAA-2100 / JCM 16839 / KCTC 5957 / BAV1)).